Here is a 118-residue protein sequence, read N- to C-terminus: Ig heavy chain V region AC38 205.12 (118 aa).

The segment at 1–98 (EVQLQQSGPE…EDSAVYYCAR (98 aa)) is v segment. Cysteines 22 and 96 form a disulfide. The d segment stretch occupies residues 99–104 (GYGYDP). Positions 105–118 (FDVWGTGTTVTVSS) are j segment.

This is Ig heavy chain V region AC38 205.12 from Mus musculus (Mouse).